Here is a 589-residue protein sequence, read N- to C-terminus: MAAADGDDSLYPIAVLIDELRNEDVQLRLNSIKKLSTIALALGVERTRSELLPFLTDTIYDEDEVLLALAEQLGTFTTLVGGPEYVHCLLPPLESLATVEETVVRDKAVESLRAISHEHSPSDLEAHFVPLVKRLAGGDWFTSRTSACGLFSVCYPRVSSAVKAELRQYFRNLCSDDTPMVRRAAASKLGEFAKVLELDNVKSEIIPMFSNLASDEQDSVRLLAVEACVNIAQLLPQEDLEALVMPTLRQAAEDKSWRVRYMVADKFTELQKAVGPEITKTDLVPAFQNLMKDCEAEVRAAASHKVKEFCENLSADCRENVIMTQILPCIKELVSDANQHVKSALASVIMGLSPILGKDNTIEHLLPLFLAQLKDECPEVRLNIISNLDCVNEVIGIRQLSQSLLPAIVELAEDAKWRVRLAIIEYMPLLAGQLGVEFFDEKLNSLCMAWLVDHVYAIREAATSNLKKLVEKFGKEWAHATIIPKVLAMSGDPNYLHRMTTLFCINVLSEVCGQDITTKHMLPTVLRMAGDPVANVRFNVAKSLQKIGPILDNSTLQSEVKPILEKLTQDQDVDVKYFAQEALTVLSLA.

Residue A2 is modified to N-acetylalanine. HEAT repeat units lie at residues 8–46 (DSLY…GVER), 47–84 (TRSE…GGPE), 85–123 (YVHC…SPSD), 124–161 (LEAH…VSSA), 162–200 (VKAE…ELDN), 201–239 (VKSE…PQED), 240–278 (LEAL…GPEI), 279–321 (TKTD…RENV), 322–360 (IMTQ…GKDN), 361–399 (TIEH…GIRQ), 400–438 (LSQS…GVEF), 439–477 (FDEK…GKEW), 478–516 (AHAT…GQDI), 517–555 (TTKH…DNST), and 556–589 (LQSE…LSLA). K280 carries the N6-acetyllysine modification.

This sequence belongs to the phosphatase 2A regulatory subunit A family. In terms of assembly, PP2A consists of a common heterodimeric core enzyme, composed of PPP2CA a 36 kDa catalytic subunit (subunit C) and PPP2R1A a 65 kDa constant regulatory subunit (PR65 or subunit A), that associates with a variety of regulatory subunits. Proteins that associate with the core dimer include three families of regulatory subunits B (the R2/B/PR55/B55, R3/B''/PR72/PR130/PR59 and R5/B'/B56 families), the 48 kDa variable regulatory subunit, viral proteins, and cell signaling molecules. Found in a complex with at least ARL2, PPP2CB, PPP2R1A, PPP2R2A, PPP2R5E and TBCD. Interacts with the PP2A C catalytic subunit PPP2CA. Interacts with the PP2A B subunit PPP2R2A. Interacts with the PP2A B subunit PPP2R5D. Interacts with FOXO1; the interaction dephosphorylates FOXO1 on AKT-mediated phosphorylation sites. Interacts with IPO9. Interacts with TP53 and SGO1. Interacts with PLA2G16; this interaction might decrease PP2A activity. Interacts with CTTNBP2NL. Interacts with GNA12; the interaction promotes protein phosphatase 2A activation causing dephosphorylation of MAPT. Interacts with CIP2A; this interaction stabilizes CIP2A. Interacts with PABIR1/FAM122A. Interacts with ADCY8; antagonizes interaction between ADCY8 and calmodulin. Interacts with CRTC3 (when phosphorylated at 'Ser-391'). Interacts with SPRY2. Part of the core of STRIPAK complexes composed of PP2A catalytic and scaffolding subunits, the striatins (PP2A regulatory subunits), the striatin-associated proteins MOB4, STRIP1 and STRIP2, PDCD10 and members of the STE20 kinases, such as STK24 and STK26. Component of the Integrator-PP2A (INTAC) complex, composed of the Integrator core complex and protein phosphatase 2A subunits PPP2CA and PPP2R1A.

The protein localises to the cytoplasm. Its subcellular location is the nucleus. The protein resides in the chromosome. It localises to the centromere. It is found in the lateral cell membrane. The protein localises to the cell projection. Its subcellular location is the dendrite. Functionally, the PR65 subunit of protein phosphatase 2A serves as a scaffolding molecule to coordinate the assembly of the catalytic subunit and a variable regulatory B subunit. Upon interaction with GNA12 promotes dephosphorylation of microtubule associated protein TAU/MAPT. Required for proper chromosome segregation and for centromeric localization of SGO1 in mitosis. Together with RACK1 adapter, mediates dephosphorylation of AKT1 at 'Ser-473', preventing AKT1 activation and AKT-mTOR signaling pathway. Dephosphorylation of AKT1 is essential for regulatory T-cells (Treg) homeostasis and stability. Part of the striatin-interacting phosphatase and kinase (STRIPAK) complexes. STRIPAK complexes have critical roles in protein (de)phosphorylation and are regulators of multiple signaling pathways including Hippo, MAPK, nuclear receptor and cytoskeleton remodeling. Different types of STRIPAK complexes are involved in a variety of biological processes such as cell growth, differentiation, apoptosis, metabolism and immune regulation. Key mediator of a quality checkpoint during transcription elongation as part of the Integrator-PP2A (INTAC) complex. The INTAC complex drives premature transcription termination of transcripts that are unfavorably configured for transcriptional elongation: within the INTAC complex, acts as a scaffolding subunit for PPP2CA, which catalyzes dephosphorylation of the C-terminal domain (CTD) of Pol II subunit POLR2A/RPB1 and SUPT5H/SPT5, thereby preventing transcriptional elongation. Regulates the recruitment of the SKA complex to kinetochores. The protein is Serine/threonine-protein phosphatase 2A 65 kDa regulatory subunit A alpha isoform (Ppp2r1a) of Mus musculus (Mouse).